Reading from the N-terminus, the 89-residue chain is Protein RALF-like 5 (89 aa).

The N-terminal stretch at 1-25 is a signal peptide; the sequence is MLKAQVFMFVTVLVFVCVFINSNDA. Disulfide bonds link Cys39–Cys48 and Cys61–Cys67.

This sequence belongs to the plant rapid alkalinization factor (RALF) family.

The protein resides in the secreted. Cell signaling peptide that may regulate plant stress, growth, and development. Mediates a rapid alkalinization of extracellular space by mediating a transient increase in the cytoplasmic Ca(2+) concentration leading to a calcium-dependent signaling events through a cell surface receptor and a concomitant activation of some intracellular mitogen-activated protein kinases. The polypeptide is Protein RALF-like 5 (RALFL5) (Arabidopsis thaliana (Mouse-ear cress)).